A 195-amino-acid polypeptide reads, in one-letter code: Thymidine kinase (195 aa).

Residues 15–22 (GSMFSGKS) and 88–91 (DEVQ) contribute to the ATP site. The Proton acceptor role is filled by E89. The Zn(2+) site is built by C145, C148, C183, and X186.

The protein belongs to the thymidine kinase family. In terms of assembly, homotetramer.

The protein resides in the cytoplasm. The catalysed reaction is thymidine + ATP = dTMP + ADP + H(+). The sequence is that of Thymidine kinase from Bacillus cereus (strain ATCC 10987 / NRS 248).